Reading from the N-terminus, the 431-residue chain is 3-phosphoshikimate 1-carboxyvinyltransferase (431 aa).

3-phosphoshikimate-binding residues include Lys21, Ser22, and Arg26. Residue Lys21 coordinates phosphoenolpyruvate. Phosphoenolpyruvate contacts are provided by Gly93 and Arg122. Residues Ser167, Gln169, Asp318, and Lys345 each contribute to the 3-phosphoshikimate site. Residue Gln169 coordinates phosphoenolpyruvate. The active-site Proton acceptor is the Asp318. Arg349 and Arg391 together coordinate phosphoenolpyruvate.

Belongs to the EPSP synthase family. In terms of assembly, monomer.

It is found in the cytoplasm. It carries out the reaction 3-phosphoshikimate + phosphoenolpyruvate = 5-O-(1-carboxyvinyl)-3-phosphoshikimate + phosphate. Its pathway is metabolic intermediate biosynthesis; chorismate biosynthesis; chorismate from D-erythrose 4-phosphate and phosphoenolpyruvate: step 6/7. In terms of biological role, catalyzes the transfer of the enolpyruvyl moiety of phosphoenolpyruvate (PEP) to the 5-hydroxyl of shikimate-3-phosphate (S3P) to produce enolpyruvyl shikimate-3-phosphate and inorganic phosphate. The polypeptide is 3-phosphoshikimate 1-carboxyvinyltransferase (Roseiflexus castenholzii (strain DSM 13941 / HLO8)).